The chain runs to 171 residues: 3-hydroxydecanoyl-[acyl-carrier-protein] dehydratase (171 aa).

Histidine 70 is an active-site residue.

Belongs to the thioester dehydratase family. FabA subfamily. In terms of assembly, homodimer.

The protein localises to the cytoplasm. The enzyme catalyses a (3R)-hydroxyacyl-[ACP] = a (2E)-enoyl-[ACP] + H2O. It carries out the reaction (3R)-hydroxydecanoyl-[ACP] = (2E)-decenoyl-[ACP] + H2O. It catalyses the reaction (2E)-decenoyl-[ACP] = (3Z)-decenoyl-[ACP]. The protein operates within lipid metabolism; fatty acid biosynthesis. Necessary for the introduction of cis unsaturation into fatty acids. Catalyzes the dehydration of (3R)-3-hydroxydecanoyl-ACP to E-(2)-decenoyl-ACP and then its isomerization to Z-(3)-decenoyl-ACP. Can catalyze the dehydratase reaction for beta-hydroxyacyl-ACPs with saturated chain lengths up to 16:0, being most active on intermediate chain length. This Shewanella sp. (strain ANA-3) protein is 3-hydroxydecanoyl-[acyl-carrier-protein] dehydratase.